We begin with the raw amino-acid sequence, 206 residues long: Homoserine/homoserine lactone efflux protein (206 aa).

6 helical membrane-spanning segments follow: residues 5–25, 45–65, 68–88, 117–137, 148–168, and 182–202; these read WWFAYLLTSIILSLSPGSGAI, GLQTGLAIHIVLVGVGLGTLF, SVIAFEVLKWAGAAYLIWLGI, FVNLTNPKSIVFLAALFPQFI, IVLGVTTIVVDIIVMIGYATL, and MKALNKIFGSLFMLVGALLAS.

The protein belongs to the Rht family.

The protein resides in the cell membrane. Conducts the efflux of homoserine and homoserine lactone. In Escherichia coli O157:H7, this protein is Homoserine/homoserine lactone efflux protein (rhtB).